The following is a 468-amino-acid chain: Protein NEN1 (468 aa).

The region spanning 11-172 (FFDVETTVPK…DDVRMNLEVL (162 aa)) is the Exonuclease domain. The Mg(2+) site is built by aspartate 13 and glutamate 15. The Proton donor/acceptor role is filled by histidine 159. Mg(2+) is bound at residue aspartate 164.

Requires Mg(2+) as cofactor. Expressed in the sieve elements and phloem pole pericycle cells.

Its subcellular location is the cytoplasm. It is found in the nucleus. In terms of biological role, probable exonuclease involved in enuclation of sieve elements. This is Protein NEN1 from Arabidopsis thaliana (Mouse-ear cress).